A 206-amino-acid chain; its full sequence is Ribosomal RNA small subunit methyltransferase G (206 aa).

Residues glycine 73, leucine 78, 124–125 (VE), and arginine 139 each bind S-adenosyl-L-methionine.

Belongs to the methyltransferase superfamily. RNA methyltransferase RsmG family.

Its subcellular location is the cytoplasm. The catalysed reaction is guanosine(527) in 16S rRNA + S-adenosyl-L-methionine = N(7)-methylguanosine(527) in 16S rRNA + S-adenosyl-L-homocysteine. Its function is as follows. Specifically methylates the N7 position of guanine in position 527 of 16S rRNA. This is Ribosomal RNA small subunit methyltransferase G from Edwardsiella ictaluri (strain 93-146).